The sequence spans 692 residues: Elongation factor G (692 aa).

A tr-type G domain is found at 8–282 (ERTRNIGIMA…AIVDYLPAPT (275 aa)). GTP is bound by residues 17 to 24 (AHIDAGKT), 81 to 85 (DTPGH), and 135 to 138 (NKMD).

Belongs to the TRAFAC class translation factor GTPase superfamily. Classic translation factor GTPase family. EF-G/EF-2 subfamily.

It localises to the cytoplasm. Catalyzes the GTP-dependent ribosomal translocation step during translation elongation. During this step, the ribosome changes from the pre-translocational (PRE) to the post-translocational (POST) state as the newly formed A-site-bound peptidyl-tRNA and P-site-bound deacylated tRNA move to the P and E sites, respectively. Catalyzes the coordinated movement of the two tRNA molecules, the mRNA and conformational changes in the ribosome. This Desulforamulus reducens (strain ATCC BAA-1160 / DSM 100696 / MI-1) (Desulfotomaculum reducens) protein is Elongation factor G.